A 354-amino-acid polypeptide reads, in one-letter code: 5,10-methenyltetrahydromethanopterin hydrogenase (354 aa).

It belongs to the HMD family.

It catalyses the reaction 5,10-methenyl-5,6,7,8-tetrahydromethanopterin + H2 = 5,10-methylenetetrahydromethanopterin + H(+). It functions in the pathway one-carbon metabolism; methanogenesis from CO(2); 5,10-methylene-5,6,7,8-tetrahydromethanopterin from 5,10-methenyl-5,6,7,8-tetrahydromethanopterin (hydrogen route): step 1/1. Functionally, catalyzes the reversible reduction of methenyl-H(4)MPT(+) to methylene-H(4)MPT. The polypeptide is 5,10-methenyltetrahydromethanopterin hydrogenase (Methanococcus maripaludis (strain DSM 14266 / JCM 13030 / NBRC 101832 / S2 / LL)).